The sequence spans 342 residues: Flagellar P-ring protein (342 aa).

The signal sequence occupies residues Met-1–Ala-19.

This sequence belongs to the FlgI family. As to quaternary structure, the basal body constitutes a major portion of the flagellar organelle and consists of four rings (L,P,S, and M) mounted on a central rod.

The protein resides in the periplasm. Its subcellular location is the bacterial flagellum basal body. Assembles around the rod to form the L-ring and probably protects the motor/basal body from shearing forces during rotation. The sequence is that of Flagellar P-ring protein from Helicobacter pylori (strain P12).